Reading from the N-terminus, the 1147-residue chain is ATP-dependent helicase/deoxyribonuclease subunit B (1147 aa).

ATP is bound at residue 8–15 (GRAGSGKS). The [4Fe-4S] cluster site is built by C786, C1106, C1109, and C1115.

Belongs to the helicase family. AddB/RexB type 1 subfamily. As to quaternary structure, heterodimer of AddA and AddB. Mg(2+) is required as a cofactor. It depends on [4Fe-4S] cluster as a cofactor.

Functionally, the heterodimer acts as both an ATP-dependent DNA helicase and an ATP-dependent, dual-direction single-stranded exonuclease. Recognizes the chi site generating a DNA molecule suitable for the initiation of homologous recombination. The AddB subunit has 5' -&gt; 3' nuclease activity but not helicase activity. The chain is ATP-dependent helicase/deoxyribonuclease subunit B from Clostridium botulinum (strain Loch Maree / Type A3).